We begin with the raw amino-acid sequence, 428 residues long: MYTEPFQPTYEYALECDKHDELKDFQTEFYKKEGTIYLDGNSLGLLSKRAEKSLLTLLDSWKEYGIDGWTEGEHPWFFLSEKLGELTAPLIGALPEETIVTGSTTTNIHQVIATFYEPKGIRTKILADELTFPSDIYALQSQIRLKGLDPDEHLVRVKSRDGRTLSEDDIIHAMTDDIALILLPSVLYRSGQVLDMKRLTAEAHKRGIHIGFDLCHSIGSIPHHFKEWDVDFAIWCNYKYLNAGPGGVAGLYVNKKHCNRLPGLSGWFSSRKDKQFDMEHTLTAADHAGAYQIGTPHVLSTAPLIGSLEIFKEAGIERLREKSLHITSYMLNLIAHELSDFEFTIGNPLEDEKRGGHIYLEHAEAARICKALKADGVIPDFRAPNGVRLAPVALYNTYEEVWKSVQILKKIMKDEEYKQFENKREVVA.

Pyridoxal 5'-phosphate is bound by residues threonine 104, threonine 105, 132–135 (FPSD), aspartate 213, histidine 216, and tyrosine 238. Residue lysine 239 is modified to N6-(pyridoxal phosphate)lysine. Pyridoxal 5'-phosphate is bound by residues tryptophan 267 and threonine 295.

This sequence belongs to the kynureninase family. As to quaternary structure, homodimer. Pyridoxal 5'-phosphate is required as a cofactor.

The enzyme catalyses L-kynurenine + H2O = anthranilate + L-alanine + H(+). It catalyses the reaction 3-hydroxy-L-kynurenine + H2O = 3-hydroxyanthranilate + L-alanine + H(+). It participates in amino-acid degradation; L-kynurenine degradation; L-alanine and anthranilate from L-kynurenine: step 1/1. It functions in the pathway cofactor biosynthesis; NAD(+) biosynthesis; quinolinate from L-kynurenine: step 2/3. Functionally, catalyzes the cleavage of L-kynurenine (L-Kyn) and L-3-hydroxykynurenine (L-3OHKyn) into anthranilic acid (AA) and 3-hydroxyanthranilic acid (3-OHAA), respectively. The chain is Kynureninase from Bacillus cereus (strain ATCC 10987 / NRS 248).